Here is a 156-residue protein sequence, read N- to C-terminus: Small ribosomal subunit protein uS7 (156 aa).

This sequence belongs to the universal ribosomal protein uS7 family. As to quaternary structure, part of the 30S ribosomal subunit. Contacts proteins S9 and S11.

In terms of biological role, one of the primary rRNA binding proteins, it binds directly to 16S rRNA where it nucleates assembly of the head domain of the 30S subunit. Is located at the subunit interface close to the decoding center, probably blocks exit of the E-site tRNA. The protein is Small ribosomal subunit protein uS7 of Phytoplasma mali (strain AT).